A 325-amino-acid polypeptide reads, in one-letter code: Quinone oxidoreductase (325 aa).

Belongs to the zinc-containing alcohol dehydrogenase family. Quinone oxidoreductase subfamily.

The catalysed reaction is 2 a quinone + NADPH + H(+) = 2 a 1,4-benzosemiquinone + NADP(+). This chain is Quinone oxidoreductase (qor), found in Pseudomonas aeruginosa (strain ATCC 15692 / DSM 22644 / CIP 104116 / JCM 14847 / LMG 12228 / 1C / PRS 101 / PAO1).